We begin with the raw amino-acid sequence, 264 residues long: uncharacterized protein (264 aa).

3 helical membrane passes run 48–68, 112–132, and 142–162; these read LTITLLYLHPVSFSAILLLVF, ITPSAISSGLLVSLVLIFLLA, and LPIAIWIGLISLHPKLRSYLI. The residue at position 260 (S260) is a Phosphoserine.

The protein resides in the membrane. This is an uncharacterized protein from Schizosaccharomyces pombe (strain 972 / ATCC 24843) (Fission yeast).